The following is a 119-amino-acid chain: Protein phosphatase EYA4 (119 aa).

The protein belongs to the HAD-like hydrolase superfamily. EYA family. Mg(2+) is required as a cofactor.

The protein localises to the cytoplasm. It is found in the nucleus. It catalyses the reaction O-phospho-L-tyrosyl-[protein] + H2O = L-tyrosyl-[protein] + phosphate. In terms of biological role, tyrosine phosphatase that specifically dephosphorylates 'Tyr-142' of histone H2AX (H2AXY142ph). 'Tyr-142' phosphorylation of histone H2AX plays a central role in DNA repair and acts as a mark that distinguishes between apoptotic and repair responses to genotoxic stress. Promotes efficient DNA repair by dephosphorylating H2AX, promoting the recruitment of DNA repair complexes containing MDC1. Its function as histone phosphatase probably explains its role in transcription regulation during organogenesis. May be involved in development of the eye. This chain is Protein phosphatase EYA4 (EYA4), found in Gallus gallus (Chicken).